The chain runs to 352 residues: Potassium/proton antiporter CemA (352 aa).

3 consecutive transmembrane segments (helical) span residues 52-72, 227-247, and 312-332; these read VLVS…IHFF, IAAL…IILF, and IILL…KYWI.

This sequence belongs to the CemA family.

Its subcellular location is the plastid. It is found in the chloroplast inner membrane. The enzyme catalyses K(+)(in) + H(+)(out) = K(+)(out) + H(+)(in). Its function is as follows. Contributes to K(+)/H(+) antiport activity by supporting proton efflux to control proton extrusion and homeostasis in chloroplasts in a light-dependent manner to modulate photosynthesis. Prevents excessive induction of non-photochemical quenching (NPQ) under continuous-light conditions. Indirectly promotes efficient inorganic carbon uptake into chloroplasts. This chain is Potassium/proton antiporter CemA, found in Oltmannsiellopsis viridis (Marine flagellate).